The following is a 455-amino-acid chain: Phosphoglucosamine mutase (455 aa).

Ser106 acts as the Phosphoserine intermediate in catalysis. Mg(2+)-binding residues include Ser106, Asp245, Asp247, and Asp249. Ser106 bears the Phosphoserine mark.

This sequence belongs to the phosphohexose mutase family. Mg(2+) serves as cofactor. Activated by phosphorylation.

It catalyses the reaction alpha-D-glucosamine 1-phosphate = D-glucosamine 6-phosphate. In terms of biological role, catalyzes the conversion of glucosamine-6-phosphate to glucosamine-1-phosphate. This is Phosphoglucosamine mutase from Acaryochloris marina (strain MBIC 11017).